Consider the following 456-residue polypeptide: MRKKWKMGGMKYIFSLLFFLLLEGGKTEQVKHSETYCMFQDKKYRVGERWHPYLEPYGLVYCVNCICSENGNVLCSRVRCPNVHCLSPVHIPHLCCPRCPDSLPPVNNKVTSKSCEYNGTTYQHGELFVAEGLFQNRQPNQCTQCSCSEGNVYCGLKTCPKLTCAFPVSVPDSCCRVCRGDGELSWEHSDGDIFRQPANREARHSYHRSHYDPPPSRQAGGLSRFPGARSHRGALMDSQQASGTIVQIVINNKHKHGQVCVSNGKTYSHGESWHPNLRAFGIVECVLCTCNVTKQECKKIHCPNRYPCKYPQKIDGKCCKVCPGKKAKELPGQSFDNKGYFCGEETMPVYESVFMEDGETTRKIALETERPPQVEVHVWTIRKGILQHFHIEKISKRMFEELPHFKLVTRTTLSQWKIFTEGEAQISQMCSSRVCRTELEDLVKVLYLERSEKGHC.

A signal peptide spans 1–27 (MRKKWKMGGMKYIFSLLFFLLLEGGKT). VWFC domains lie at 35-100 (TYCM…PRCP) and 113-179 (KSCE…RVCR). Asparagine 118 is a glycosylation site (N-linked (GlcNAc...) asparagine). A Cell attachment site motif is present at residues 179–181 (RGD). Positions 202–223 (ARHSYHRSHYDPPPSRQAGGLS) are disordered. The VWFC 3 domain maps to 258–323 (QVCVSNGKTY…IDGKCCKVCP (66 aa)). Asparagine 291 is a glycosylation site (N-linked (GlcNAc...) asparagine).

Expressed in the developing cornea and in the eye anterior segment in addition to the retina. Differentially expressed in the fetal brain. There is high expression in cerebellum and neocortex. Expressed in retinal pericytes.

Its subcellular location is the secreted. Functionally, antagonizes the function of BMP4 by binding to it and preventing its interaction with receptors. Alters the fate commitment of neural stem cells from gliogenesis to neurogenesis. Contributes to neuronal differentiation of neural stem cells in the brain by preventing the adoption of a glial fate. May play a crucial role in dorsoventral axis formation. May play a role in embryonic bone formation. May also play an important role in regulating retinal angiogenesis through modulation of BMP4 actions in endothelial cells. Plays a role during anterior segment eye development. The polypeptide is Chordin-like protein 1 (CHRDL1) (Homo sapiens (Human)).